The following is a 707-amino-acid chain: Keratin, type II cytoskeletal 2 epidermal (707 aa).

The segment at 1 to 20 (MSCQISCRSRRGGGGGGGGG) is disordered. The tract at residues 1 to 198 (MSCQISCRSR…DPEIQNVKSQ (198 aa)) is head. At arginine 22 the chain carries Asymmetric dimethylarginine. Residues serine 25 and serine 28 each carry the phosphoserine modification. The span at 29 to 38 (AVVSGGSRRS) shows a compositional bias: low complexity. The segment at 29–59 (AVVSGGSRRSNTSFSCISRHGGGRGGSGGGG) is disordered. At arginine 52 the chain carries Omega-N-methylarginine. Serine 64 is modified (phosphoserine). A coil 1A region spans residues 199–234 (EREQIKTLNNKFASFIDKVRFLEQQNQVLRTKWELL). Residues 199 to 512 (EREQIKTLNN…KLLEGEECRM (314 aa)) form the IF rod domain. The linker 1 stretch occupies residues 235–253 (QQLDVGSRTTNLDPIFQAY). The tract at residues 254 to 345 (IGMLKKQVDR…TLYDAELSQL (92 aa)) is coil 1B. Positions 346–369 (QQDVTDTNVILSMDNNRNLDLDSI) are linker 12. The coil 2 stretch occupies residues 370–508 (IAEVQNQYEM…ATYRKLLEGE (139 aa)). Residues 509-707 (ECRMSGDFSD…CGSGVTFSFR (199 aa)) are tail. A disordered region spans residues 531–707 (SSVASKTGFG…CGSGVTFSFR (177 aa)). Gly residues predominate over residues 539–700 (FGSGGQSSGG…GSGSGEGCGS (162 aa)). Omega-N-methylarginine occurs at positions 555, 593, 607, and 675.

It belongs to the intermediate filament family. In terms of assembly, heterotetramer of two type I and two type II keratins. Associates with KRT10. Expressed predominantly in the suprabasal layers of the plantar epidermis outside of the footpads (at protein level). Expressed in the suprabasal layers of the interfollicular epidermis of the ear, in the interscale regions distant from the hair follicles in the tail, and in the soles of the footpads (at protein level). Expressed mainly in the middle spinous and granular cells of the epidermis of adult tail, nipple and footsole skin. Also found in ear.

The protein localises to the cytoplasm. Its function is as follows. Probably contributes to terminal cornification. Associated with keratinocyte activation, proliferation and keratinization. Required for maintenance of corneocytes and keratin filaments in suprabasal keratinocytes in the epidermis of the ear, potentially via moderation of expression and localization of keratins and their partner proteins. Plays a role in the establishment of the epidermal barrier on plantar skin. The chain is Keratin, type II cytoskeletal 2 epidermal from Mus musculus (Mouse).